We begin with the raw amino-acid sequence, 576 residues long: Probable metalloreductase AIM14 (576 aa).

7 helical membrane passes run 21 to 41 (IKYG…LALL), 70 to 90 (AIHL…HYSL), 101 to 118 (LGRL…LTLR), 142 to 162 (IITV…AIDD), 177 to 197 (FVGF…IGPM), 204 to 224 (LFYI…PIHS), and 230 to 250 (FPFL…RIVF). Residues 101-219 (LGRLSYALIP…NLVNVAFILL (119 aa)) enclose the Ferric oxidoreductase domain. Residues 250 to 388 (FAKSLMILNK…GGSGISFALP (139 aa)) enclose the FAD-binding FR-type domain. Polar residues predominate over residues 480–505 (ISNFNSENADSNDNTPETSHSPTKEN). The segment at 480–507 (ISNFNSENADSNDNTPETSHSPTKENGS) is disordered.

This sequence belongs to the ferric reductase (FRE) family. AIM14 subfamily. In terms of assembly, interacts with ribosomes.

It localises to the membrane. In terms of biological role, probable cell surface metalloreductase. May be involved in iron or copper homeostasis. The protein is Probable metalloreductase AIM14 (AIM14) of Saccharomyces cerevisiae (strain Lalvin EC1118 / Prise de mousse) (Baker's yeast).